We begin with the raw amino-acid sequence, 256 residues long: Type III pantothenate kinase (256 aa).

Position 6–13 (6–13 (DIGNTHIV)) interacts with ATP. Residue 109–112 (GADR) coordinates substrate. The Proton acceptor role is filled by Asp111. Residue Asp132 coordinates K(+). Thr135 lines the ATP pocket. Thr186 provides a ligand contact to substrate.

The protein belongs to the type III pantothenate kinase family. Homodimer. NH4(+) serves as cofactor. It depends on K(+) as a cofactor.

The protein resides in the cytoplasm. It catalyses the reaction (R)-pantothenate + ATP = (R)-4'-phosphopantothenate + ADP + H(+). It functions in the pathway cofactor biosynthesis; coenzyme A biosynthesis; CoA from (R)-pantothenate: step 1/5. Catalyzes the phosphorylation of pantothenate (Pan), the first step in CoA biosynthesis. The sequence is that of Type III pantothenate kinase from Fusobacterium nucleatum subsp. nucleatum (strain ATCC 25586 / DSM 15643 / BCRC 10681 / CIP 101130 / JCM 8532 / KCTC 2640 / LMG 13131 / VPI 4355).